A 405-amino-acid chain; its full sequence is MSSSKYVGQLKQNNIQINSLRGSNDRAEKHMLEHEQALTEKTNLFMEYQQNELKKHTDDKSNPHLVTKEQVGLGNVLNNVQATKEEFDEHLNDTLNPHSVTKSQVGLANVLNEKQATKTEFDQHAQDTIIHITASERTTWNAAESNSKKYTDAHSQNTNNPHKVTAIQVGLGNLTNDKQATKLEFDAHIKDNERHITSTERSKWNSAQLTKISSDDGQPLVSITSDFHSELLNSPTLTYFGYDKAALEAPPSNGRGFWTCSADKLYGQAIVLTNDNKTYRKSLINGAWSSWERLISSSEIDNVPWLSVTYKNGAKTGSRPLQYRKVAGTLQLSGHVVTNRDVVFASIPTEFSPTQGAVKSVEVSGTFGRSKLFVNSNGDLQLSGVSADNSAAITGYYIDVVVPLN.

Residues 9–36 (QLKQNNIQINSLRGSNDRAEKHMLEHEQ) adopt a coiled-coil conformation.

This chain is SPbeta prophage-derived uncharacterized protein YomR (yomR), found in Bacillus subtilis (strain 168).